The chain runs to 223 residues: MNIAKLIDHTVLKPNSKKEDVMKVIEEAKKYNFASVCINPTWVKLAAEELAGHDVDVCTVIGFPLGANTTETKVFETKDVIAKGATEVDMVINVGALKDGDDEFVEKDIREVVQAAKGKALVKVIIETCLLTDEEKVRACELSVKAGADFVKTSTGFSTGGATAEDIALMRKTVGPNVGVKASGGVRTREDAEKMIEAGASRIGASASVAIVLNDEKGATDNY.

The active-site Proton donor/acceptor is the Asp89. The active-site Schiff-base intermediate with acetaldehyde is the Lys152. Lys181 serves as the catalytic Proton donor/acceptor.

The protein belongs to the DeoC/FbaB aldolase family. DeoC type 1 subfamily.

Its subcellular location is the cytoplasm. The catalysed reaction is 2-deoxy-D-ribose 5-phosphate = D-glyceraldehyde 3-phosphate + acetaldehyde. It functions in the pathway carbohydrate degradation; 2-deoxy-D-ribose 1-phosphate degradation; D-glyceraldehyde 3-phosphate and acetaldehyde from 2-deoxy-alpha-D-ribose 1-phosphate: step 2/2. In terms of biological role, catalyzes a reversible aldol reaction between acetaldehyde and D-glyceraldehyde 3-phosphate to generate 2-deoxy-D-ribose 5-phosphate. This chain is Deoxyribose-phosphate aldolase, found in Bacillus cytotoxicus (strain DSM 22905 / CIP 110041 / 391-98 / NVH 391-98).